Consider the following 105-residue polypeptide: UPF0235 protein Mext_2130 (105 aa).

The protein belongs to the UPF0235 family.

The protein is UPF0235 protein Mext_2130 of Methylorubrum extorquens (strain PA1) (Methylobacterium extorquens).